A 562-amino-acid chain; its full sequence is Tryptophan 2-monooxygenase (562 aa).

FMN contacts are provided by serine 54, glutamate 74, arginine 76, arginine 82, and arginine 104. Position 104 (arginine 104) interacts with substrate.

The protein belongs to the tryptophan 2-monooxygenase family. FMN serves as cofactor.

It carries out the reaction L-tryptophan + O2 = indole-3-acetamide + CO2 + H2O. The protein operates within plant hormone metabolism; auxin biosynthesis. The protein is Tryptophan 2-monooxygenase (iaaM) of Pantoea agglomerans pv. gypsophilae (Erwinia herbicola).